The following is a 211-amino-acid chain: Methylthioribulose-1-phosphate dehydratase (211 aa).

Positions 97 and 99 each coordinate Zn(2+).

It belongs to the aldolase class II family. MtnB subfamily. As to quaternary structure, homotetramer. Zn(2+) serves as cofactor.

It carries out the reaction 5-(methylsulfanyl)-D-ribulose 1-phosphate = 5-methylsulfanyl-2,3-dioxopentyl phosphate + H2O. It functions in the pathway amino-acid biosynthesis; L-methionine biosynthesis via salvage pathway; L-methionine from S-methyl-5-thio-alpha-D-ribose 1-phosphate: step 2/6. Its function is as follows. Catalyzes the dehydration of methylthioribulose-1-phosphate (MTRu-1-P) into 2,3-diketo-5-methylthiopentyl-1-phosphate (DK-MTP-1-P). The chain is Methylthioribulose-1-phosphate dehydratase from Geobacillus thermodenitrificans (strain NG80-2).